The primary structure comprises 201 residues: MISHFSGTVSAAGPTWVVLDNHGVGIKVLCPPATAASARINQDMSLHTSLVVREESLTLYGFVEADDRDAFELVQTASGVGPKLAAAIMSVLDAAQLATAITEEDDATLCRVPGIGRKGAAKMILELKDKVAALAPRGASASGATHVAAPWREQVAEGLVGLGWSTKDAEKAVDKVVALKEADPAMSIGNLMRAALRSLAR.

Residues 1 to 63 (MISHFSGTVS…EESLTLYGFV (63 aa)) are domain I. Positions 64–142 (EADDRDAFEL…ALAPRGASAS (79 aa)) are domain II. The flexible linker stretch occupies residues 143-153 (GATHVAAPWRE). The segment at 153–201 (EQVAEGLVGLGWSTKDAEKAVDKVVALKEADPAMSIGNLMRAALRSLAR) is domain III.

This sequence belongs to the RuvA family. In terms of assembly, homotetramer. Forms an RuvA(8)-RuvB(12)-Holliday junction (HJ) complex. HJ DNA is sandwiched between 2 RuvA tetramers; dsDNA enters through RuvA and exits via RuvB. An RuvB hexamer assembles on each DNA strand where it exits the tetramer. Each RuvB hexamer is contacted by two RuvA subunits (via domain III) on 2 adjacent RuvB subunits; this complex drives branch migration. In the full resolvosome a probable DNA-RuvA(4)-RuvB(12)-RuvC(2) complex forms which resolves the HJ.

It localises to the cytoplasm. In terms of biological role, the RuvA-RuvB-RuvC complex processes Holliday junction (HJ) DNA during genetic recombination and DNA repair, while the RuvA-RuvB complex plays an important role in the rescue of blocked DNA replication forks via replication fork reversal (RFR). RuvA specifically binds to HJ cruciform DNA, conferring on it an open structure. The RuvB hexamer acts as an ATP-dependent pump, pulling dsDNA into and through the RuvAB complex. HJ branch migration allows RuvC to scan DNA until it finds its consensus sequence, where it cleaves and resolves the cruciform DNA. This chain is Holliday junction branch migration complex subunit RuvA, found in Cutibacterium acnes (strain DSM 16379 / KPA171202) (Propionibacterium acnes).